The chain runs to 1022 residues: Dihydropyrimidine dehydrogenase [NADP(+)] (1022 aa).

The interval Ala-26 to Pro-45 is disordered. A 4Fe-4S ferredoxin-type 1 domain is found at Glu-69 to Phe-100. Positions 79, 82, 87, and 91 each coordinate [4Fe-4S] cluster. Val-129 is an FAD binding site. Cys-130, Cys-136, Cys-140, and Gln-156 together coordinate [4Fe-4S] cluster. Residues Gly-194–Ala-198, Glu-218–Leu-226, Arg-235, and Leu-261 contribute to the FAD site. NADP(+) contacts are provided by residues Ala-340–Thr-343, Arg-364–Lys-365, Arg-371, Ala-437–Gly-439, and Asp-481–Asn-487. FAD is bound at residue Gly-480 to Thr-489. Residues Ser-550 and Lys-574–Thr-575 each bind FMN. Substrate is bound by residues Asn-609 and Asn-668 to Ser-670. Cys-671 serves as the catalytic Proton acceptor. Residue Lys-709 coordinates FMN. A substrate-binding site is contributed by Asn-736–Thr-737. FMN contacts are provided by residues Gly-767, Thr-793–Gly-795, and Cys-816–Ser-817. 4Fe-4S ferredoxin-type domains are found at residues Val-943–Glu-975 and Thr-976–Arg-1006. The [4Fe-4S] cluster site is built by Cys-952, Cys-955, Cys-958, Cys-962, Cys-985, Cys-988, Cys-991, and Cys-995.

This sequence belongs to the dihydropyrimidine dehydrogenase family. In terms of assembly, homodimer. FAD is required as a cofactor. The cofactor is FMN. It depends on [4Fe-4S] cluster as a cofactor.

The protein resides in the cytoplasm. The catalysed reaction is 5,6-dihydrouracil + NADP(+) = uracil + NADPH + H(+). The enzyme catalyses 5,6-dihydrothymine + NADP(+) = thymine + NADPH + H(+). It functions in the pathway amino-acid biosynthesis; beta-alanine biosynthesis. Functionally, involved in pyrimidine base degradation. Catalyzes the reduction of uracil and thymine. Also involved the degradation of the chemotherapeutic drug 5-fluorouracil. The polypeptide is Dihydropyrimidine dehydrogenase [NADP(+)] (dpyd) (Danio rerio (Zebrafish)).